The primary structure comprises 190 residues: Potassium-transporting ATPase KdpC subunit (190 aa).

A helical membrane pass occupies residues 15–35 (LWILTALIYPAIVLVIGQLVF).

The protein belongs to the KdpC family. The system is composed of three essential subunits: KdpA, KdpB and KdpC.

Its subcellular location is the cell inner membrane. In terms of biological role, part of the high-affinity ATP-driven potassium transport (or Kdp) system, which catalyzes the hydrolysis of ATP coupled with the electrogenic transport of potassium into the cytoplasm. This subunit acts as a catalytic chaperone that increases the ATP-binding affinity of the ATP-hydrolyzing subunit KdpB by the formation of a transient KdpB/KdpC/ATP ternary complex. This Synechocystis sp. (strain ATCC 27184 / PCC 6803 / Kazusa) protein is Potassium-transporting ATPase KdpC subunit.